A 268-amino-acid chain; its full sequence is Mediator of RNA polymerase II transcription subunit 18 (268 aa).

Positions 91–112 are disordered; sequence APASPVADQDAHMSGTDEKSSV. The segment covering 99-112 has biased composition (basic and acidic residues); sequence QDAHMSGTDEKSSV.

Belongs to the Mediator complex subunit 18 family. In terms of assembly, component of the Mediator complex.

Its subcellular location is the nucleus. Its function is as follows. Component of the Mediator complex, a coactivator involved in the regulated transcription of nearly all RNA polymerase II-dependent genes. Mediator functions as a bridge to convey information from gene-specific regulatory proteins to the basal RNA polymerase II transcription machinery. Mediator is recruited to promoters by direct interactions with regulatory proteins and serves as a scaffold for the assembly of a functional preinitiation complex with RNA polymerase II and the general transcription factors. This chain is Mediator of RNA polymerase II transcription subunit 18 (srb5), found in Aspergillus fumigatus (strain ATCC MYA-4609 / CBS 101355 / FGSC A1100 / Af293) (Neosartorya fumigata).